A 278-amino-acid polypeptide reads, in one-letter code: Large ribosomal subunit protein uL2 (278 aa).

Disordered regions lie at residues 32–54 (SLCR…TRHI) and 221–278 (RGMT…RNAK). Gly residues predominate over residues 232–245 (NGGGEGKSKSGGGR).

The protein belongs to the universal ribosomal protein uL2 family. As to quaternary structure, part of the 50S ribosomal subunit. Forms a bridge to the 30S subunit in the 70S ribosome.

Its function is as follows. One of the primary rRNA binding proteins. Required for association of the 30S and 50S subunits to form the 70S ribosome, for tRNA binding and peptide bond formation. It has been suggested to have peptidyltransferase activity; this is somewhat controversial. Makes several contacts with the 16S rRNA in the 70S ribosome. This is Large ribosomal subunit protein uL2 from Akkermansia muciniphila (strain ATCC BAA-835 / DSM 22959 / JCM 33894 / BCRC 81048 / CCUG 64013 / CIP 107961 / Muc).